Reading from the N-terminus, the 239-residue chain is Protein GrpE (239 aa).

Disordered stretches follow at residues 1 to 56 (MIEN…KNTI) and 208 to 239 (SMGP…SEDV). Positions 40-53 (TSQKKEAINTEELK) are enriched in basic and acidic residues. Over residues 224–239 (TVEEDVNSEVNTSEDV) the composition is skewed to acidic residues.

It belongs to the GrpE family. Homodimer.

The protein resides in the cytoplasm. Functionally, participates actively in the response to hyperosmotic and heat shock by preventing the aggregation of stress-denatured proteins, in association with DnaK and GrpE. It is the nucleotide exchange factor for DnaK and may function as a thermosensor. Unfolded proteins bind initially to DnaJ; upon interaction with the DnaJ-bound protein, DnaK hydrolyzes its bound ATP, resulting in the formation of a stable complex. GrpE releases ADP from DnaK; ATP binding to DnaK triggers the release of the substrate protein, thus completing the reaction cycle. Several rounds of ATP-dependent interactions between DnaJ, DnaK and GrpE are required for fully efficient folding. The polypeptide is Protein GrpE (Prochlorococcus marinus (strain MIT 9215)).